We begin with the raw amino-acid sequence, 197 residues long: MEPRIASTVRTTRETDIQIRLDLDGTGRVQAETGVPFLDHMLAQIATHGLIDIDVSAQGDLHIDDHHTNEDVGIAFGQCLAKALGDKRGISRFGHFAAPLDEALVQVVLDLSGRPHLSYGLEIPTQRVGSYDTQLVREFYQAVVNNSSMTLHLRQWAGINSHHIIEASFKAFARALRLAVEIDPRRAGSLPSSKGAL.

It belongs to the imidazoleglycerol-phosphate dehydratase family.

Its subcellular location is the cytoplasm. It carries out the reaction D-erythro-1-(imidazol-4-yl)glycerol 3-phosphate = 3-(imidazol-4-yl)-2-oxopropyl phosphate + H2O. It functions in the pathway amino-acid biosynthesis; L-histidine biosynthesis; L-histidine from 5-phospho-alpha-D-ribose 1-diphosphate: step 6/9. This Gloeobacter violaceus (strain ATCC 29082 / PCC 7421) protein is Imidazoleglycerol-phosphate dehydratase.